Consider the following 448-residue polypeptide: Exodeoxyribonuclease 7 large subunit (448 aa).

This sequence belongs to the XseA family. Heterooligomer composed of large and small subunits.

The protein localises to the cytoplasm. It carries out the reaction Exonucleolytic cleavage in either 5'- to 3'- or 3'- to 5'-direction to yield nucleoside 5'-phosphates.. Its function is as follows. Bidirectionally degrades single-stranded DNA into large acid-insoluble oligonucleotides, which are then degraded further into small acid-soluble oligonucleotides. The polypeptide is Exodeoxyribonuclease 7 large subunit (Nitrosomonas eutropha (strain DSM 101675 / C91 / Nm57)).